We begin with the raw amino-acid sequence, 505 residues long: Glycerol kinase 2 (505 aa).

Thr-17 serves as a coordination point for ADP. ATP is bound by residues Thr-17, Thr-18, and Ser-19. Residue Thr-17 coordinates sn-glycerol 3-phosphate. An ADP-binding site is contributed by Arg-21. The sn-glycerol 3-phosphate site is built by Arg-87, Glu-88, Tyr-139, and Asp-249. 5 residues coordinate glycerol: Arg-87, Glu-88, Tyr-139, Asp-249, and Gln-250. ADP is bound by residues Thr-271 and Gly-314. Residues Thr-271, Gly-314, Gln-318, and Gly-415 each coordinate ATP. The ADP site is built by Gly-415 and Asn-419.

The protein belongs to the FGGY kinase family.

It carries out the reaction glycerol + ATP = sn-glycerol 3-phosphate + ADP + H(+). The protein operates within polyol metabolism; glycerol degradation via glycerol kinase pathway; sn-glycerol 3-phosphate from glycerol: step 1/1. With respect to regulation, inhibited by fructose 1,6-bisphosphate (FBP). Its function is as follows. Key enzyme in the regulation of glycerol uptake and metabolism. Catalyzes the phosphorylation of glycerol to yield sn-glycerol 3-phosphate. The chain is Glycerol kinase 2 from Pseudomonas aeruginosa (strain ATCC 15692 / DSM 22644 / CIP 104116 / JCM 14847 / LMG 12228 / 1C / PRS 101 / PAO1).